A 113-amino-acid polypeptide reads, in one-letter code: Large ribosomal subunit protein uL22 (113 aa).

The protein belongs to the universal ribosomal protein uL22 family. As to quaternary structure, part of the 50S ribosomal subunit.

Its function is as follows. This protein binds specifically to 23S rRNA; its binding is stimulated by other ribosomal proteins, e.g. L4, L17, and L20. It is important during the early stages of 50S assembly. It makes multiple contacts with different domains of the 23S rRNA in the assembled 50S subunit and ribosome. In terms of biological role, the globular domain of the protein is located near the polypeptide exit tunnel on the outside of the subunit, while an extended beta-hairpin is found that lines the wall of the exit tunnel in the center of the 70S ribosome. This is Large ribosomal subunit protein uL22 from Syntrophomonas wolfei subsp. wolfei (strain DSM 2245B / Goettingen).